We begin with the raw amino-acid sequence, 526 residues long: Serine/threonine-protein kinase ppk22 (526 aa).

Disordered regions lie at residues 1–24 and 39–106; these read MARETEFNDKSPSSTDDGMSQSHF and AATV…PRPL. The segment covering 10–23 has biased composition (polar residues); sequence KSPSSTDDGMSQSH. Over residues 65-78 the composition is skewed to low complexity; that stretch reads NQLNELDLNDSSDQ. Ser-154 bears the Phosphoserine mark. The 291-residue stretch at 155–445 folds into the Protein kinase domain; that stretch reads FEKIRLLGQG…ASDIKQHPFF (291 aa). ATP contacts are provided by residues 161–169 and Lys-184; that span reads LGQGDVGKV. Residue Asp-280 is the Proton acceptor of the active site. Phosphothreonine is present on Thr-339. At Ser-341 the chain carries Phosphoserine. Tyr-348 carries the post-translational modification Phosphotyrosine. The AGC-kinase C-terminal domain maps to 446–526; it reads RHIQWALLRS…SVTLHHAGDE (81 aa). A disordered region spans residues 499–526; sequence MHSSTPVNEQSNPFDSFSSVTLHHAGDE. Residues 500–519 are compositionally biased toward polar residues; it reads HSSTPVNEQSNPFDSFSSVT.

It belongs to the protein kinase superfamily. AGC Ser/Thr protein kinase family.

Its subcellular location is the cytoplasm. It carries out the reaction L-seryl-[protein] + ATP = O-phospho-L-seryl-[protein] + ADP + H(+). It catalyses the reaction L-threonyl-[protein] + ATP = O-phospho-L-threonyl-[protein] + ADP + H(+). The protein is Serine/threonine-protein kinase ppk22 (ppk22) of Schizosaccharomyces pombe (strain 972 / ATCC 24843) (Fission yeast).